A 75-amino-acid chain; its full sequence is U6-lycotoxin-Ls1a (75 aa).

Residues M1 to A21 form the signal peptide. The propeptide occupies E22–R25.

The protein belongs to the neurotoxin 19 (CSTX) family. 06 (U6-Lctx) subfamily. Contains 4 disulfide bonds. In terms of tissue distribution, expressed by the venom gland.

The protein localises to the secreted. This is U6-lycotoxin-Ls1a from Lycosa singoriensis (Wolf spider).